The primary structure comprises 301 residues: Zinc finger protein LEE1 (301 aa).

Positions 1–25 (MDAFENMSVSNHPGGNARRNSQSAN) are disordered. Over residues 7-25 (MSVSNHPGGNARRNSQSAN) the composition is skewed to polar residues. A phosphoserine mark is found at Ser21 and Ser30. 2 C3H1-type zinc fingers span residues 87–114 (DYSHVPCKFFKMGNCQAGSSCPFSHSPD) and 123–145 (PCKYFAKGNCKFGNKCVNAHVLP). Ser282 carries the post-translational modification Phosphoserine.

The sequence is that of Zinc finger protein LEE1 (LEE1) from Saccharomyces cerevisiae (strain ATCC 204508 / S288c) (Baker's yeast).